The sequence spans 122 residues: MARIAGVNIPTNKRVLIALQYIHGIGPKIAGEIIEKVKIAEDRRVNQLSDQEVLQIREIIDRDYVVEGDLRRETGINIKRLMDLGCYRGLRHRRGLPVRGQRTHTNARTRKGPAKAIAGKKK.

Residues 99–122 (RGQRTHTNARTRKGPAKAIAGKKK) are disordered.

This sequence belongs to the universal ribosomal protein uS13 family. As to quaternary structure, part of the 30S ribosomal subunit. Forms a loose heterodimer with protein S19. Forms two bridges to the 50S subunit in the 70S ribosome.

Functionally, located at the top of the head of the 30S subunit, it contacts several helices of the 16S rRNA. In the 70S ribosome it contacts the 23S rRNA (bridge B1a) and protein L5 of the 50S subunit (bridge B1b), connecting the 2 subunits; these bridges are implicated in subunit movement. Contacts the tRNAs in the A and P-sites. This chain is Small ribosomal subunit protein uS13, found in Bradyrhizobium sp. (strain ORS 278).